A 1088-amino-acid polypeptide reads, in one-letter code: DNA ligase 4 (1088 aa).

2 disordered regions span residues 1-56 and 73-117; these read MALS…KFND and TTTT…TTTT. 2 stretches are compositionally biased toward low complexity: residues 25-53 and 73-90; these read DFKNQQQINTSKTTNNNNNINNKNNYNNK and TTTTTTKNTSTNSNINKT. The segment covering 95–105 has biased composition (acidic residues); that stretch reads DDIFDDEDEDS. Residues E414, K416, R421, E467, F514, E574, K579, K596, and K598 each coordinate ATP. K416 serves as the catalytic N6-AMP-lysine intermediate. A Mg(2+)-binding site is contributed by E467. E574 is a binding site for Mg(2+). 2 BRCT domains span residues 827–917 and 984–1088; these read PTQN…PKYM and CWWS…EILD.

This sequence belongs to the ATP-dependent DNA ligase family. Requires Mg(2+) as cofactor.

The protein localises to the nucleus. The catalysed reaction is ATP + (deoxyribonucleotide)n-3'-hydroxyl + 5'-phospho-(deoxyribonucleotide)m = (deoxyribonucleotide)n+m + AMP + diphosphate.. In terms of biological role, DNA ligase involved in DNA non-homologous end joining (NHEJ); required for double-strand break (DSB) repair. The chain is DNA ligase 4 (lig4) from Dictyostelium discoideum (Social amoeba).